Here is a 228-residue protein sequence, read N- to C-terminus: Homeobox protein Hox-B6a (228 aa).

The short motif at 132-137 is the Antp-type hexapeptide element; sequence VYPWMQ. Residues 150–209 constitute a DNA-binding region (homeobox); it reads GRRGRQTYTRYQTLELEKEFHFNRYLTRRRRIEIAHALCLTERQIKIWFQNRRMKWKKEN.

This sequence belongs to the Antp homeobox family.

The protein localises to the nucleus. Sequence-specific transcription factor which is part of a developmental regulatory system that provides cells with specific positional identities on the anterior-posterior axis. In Danio rerio (Zebrafish), this protein is Homeobox protein Hox-B6a (hoxb6a).